We begin with the raw amino-acid sequence, 593 residues long: Meiotic recombination protein REC8 homolog (593 aa).

Position 149 is a phosphoserine (Ser149). A Phosphothreonine modification is found at Thr164. Phosphoserine is present on Ser192. Disordered stretches follow at residues 247–282 (QRRASPPLDESKEEPRALEGDGLVSSLSPPAPAQVE), 317–344 (ELRLPAPPSIEKRPPSPQRPPRRRRRGR), and 422–444 (PQLETEETVEEERVADKEERRKT). Basic and acidic residues predominate over residues 255 to 265 (DESKEEPRALE). A compositionally biased stretch (basic and acidic residues) spans 432-444 (EERVADKEERRKT).

This sequence belongs to the rad21 family. As to quaternary structure, interacts (phosphorylated and unphosphorylated form) with SMC3. Interacts with SYCP3. Interacts (phosphorylated and unphosphorylated form) with SMC1B. Does not interact with SMC1A. Interacts with RAD51. Forms a complex with EWSR1, PRDM9, SYCP3 and SYCP1; complex formation is dependent of phosphorylated form of REC8 and requires PRDM9 bound to hotspot DNA; EWSR1 joins PRDM9 with the chromosomal axis through REC8. Phosphorylated.

It is found in the nucleus. It localises to the chromosome. The protein localises to the centromere. Functionally, required during meiosis for separation of sister chromatids and homologous chromosomes. Proteolytic cleavage of REC8 on chromosome arms by separin during anaphase I allows for homologous chromosome separation in meiosis I and cleavage of REC8 on centromeres during anaphase II allows for sister chromatid separation in meiosis II. This is Meiotic recombination protein REC8 homolog from Rattus norvegicus (Rat).